The following is a 368-amino-acid chain: DNA replication and repair protein RecF (368 aa).

ATP is bound at residue 30–37 (GNNAQGKT).

It belongs to the RecF family.

It localises to the cytoplasm. Functionally, the RecF protein is involved in DNA metabolism; it is required for DNA replication and normal SOS inducibility. RecF binds preferentially to single-stranded, linear DNA. It also seems to bind ATP. This is DNA replication and repair protein RecF from Streptococcus pyogenes serotype M12 (strain MGAS9429).